The primary structure comprises 328 residues: Formimidoylglutamase (328 aa).

6 residues coordinate Mn(2+): histidine 133, aspartate 159, histidine 161, aspartate 163, aspartate 253, and aspartate 255.

This sequence belongs to the arginase family. Mn(2+) serves as cofactor.

It carries out the reaction N-formimidoyl-L-glutamate + H2O = formamide + L-glutamate. It functions in the pathway amino-acid degradation; L-histidine degradation into L-glutamate; L-glutamate from N-formimidoyl-L-glutamate (hydrolase route): step 1/1. In terms of biological role, catalyzes the conversion of N-formimidoyl-L-glutamate to L-glutamate and formamide. In Streptococcus pyogenes serotype M28 (strain MGAS6180), this protein is Formimidoylglutamase.